A 294-amino-acid chain; its full sequence is 4-hydroxy-tetrahydrodipicolinate synthase (294 aa).

Thr-45 is a binding site for pyruvate. Catalysis depends on Tyr-133, which acts as the Proton donor/acceptor. Residue Lys-161 is the Schiff-base intermediate with substrate of the active site. Position 203 (Ile-203) interacts with pyruvate.

This sequence belongs to the DapA family. As to quaternary structure, homotetramer; dimer of dimers.

Its subcellular location is the cytoplasm. It catalyses the reaction L-aspartate 4-semialdehyde + pyruvate = (2S,4S)-4-hydroxy-2,3,4,5-tetrahydrodipicolinate + H2O + H(+). It functions in the pathway amino-acid biosynthesis; L-lysine biosynthesis via DAP pathway; (S)-tetrahydrodipicolinate from L-aspartate: step 3/4. Its function is as follows. Catalyzes the condensation of (S)-aspartate-beta-semialdehyde [(S)-ASA] and pyruvate to 4-hydroxy-tetrahydrodipicolinate (HTPA). The polypeptide is 4-hydroxy-tetrahydrodipicolinate synthase (Buchnera aphidicola subsp. Baizongia pistaciae (strain Bp)).